The following is a 203-amino-acid chain: GTP cyclohydrolase 1 (203 aa).

Zn(2+) contacts are provided by Cys-87, His-90, and Cys-158.

Belongs to the GTP cyclohydrolase I family. Toroid-shaped homodecamer, composed of two pentamers of five dimers.

The catalysed reaction is GTP + H2O = 7,8-dihydroneopterin 3'-triphosphate + formate + H(+). Its pathway is cofactor biosynthesis; 7,8-dihydroneopterin triphosphate biosynthesis; 7,8-dihydroneopterin triphosphate from GTP: step 1/1. This Xylella fastidiosa (strain 9a5c) protein is GTP cyclohydrolase 1.